The sequence spans 314 residues: 2,3-dihydroxyphenylpropionate/2,3-dihydroxicinnamic acid 1,2-dioxygenase (314 aa).

The Proton donor role is filled by His-115. The active-site Proton acceptor is the His-179.

This sequence belongs to the LigB/MhpB extradiol dioxygenase family. In terms of assembly, homotetramer. Fe(2+) is required as a cofactor.

It catalyses the reaction 3-(2,3-dihydroxyphenyl)propanoate + O2 = (2Z,4E)-2-hydroxy-6-oxonona-2,4-dienedioate + H(+). The catalysed reaction is (2E)-3-(2,3-dihydroxyphenyl)prop-2-enoate + O2 = (2Z,4E,7E)-2-hydroxy-6-oxonona-2,4,7-trienedioate + H(+). It participates in aromatic compound metabolism; 3-phenylpropanoate degradation. In terms of biological role, catalyzes the non-heme iron(II)-dependent oxidative cleavage of 2,3-dihydroxyphenylpropionic acid and 2,3-dihydroxicinnamic acid into 2-hydroxy-6-ketononadienedioate and 2-hydroxy-6-ketononatrienedioate, respectively. In Cupriavidus pinatubonensis (strain JMP 134 / LMG 1197) (Cupriavidus necator (strain JMP 134)), this protein is 2,3-dihydroxyphenylpropionate/2,3-dihydroxicinnamic acid 1,2-dioxygenase.